Consider the following 386-residue polypeptide: Ribonucleoside-diphosphate reductase subunit M2 (386 aa).

A compositionally biased stretch (polar residues) spans Met-1–Ser-24. Residues Met-1 to Ser-36 are disordered. At Ser-6 the chain carries Phosphoserine. Phosphothreonine is present on Thr-31. Fe cation contacts are provided by Asp-135, Glu-166, and His-169. Tyr-173 is a catalytic residue. Residues Glu-229, Glu-263, and His-266 each contribute to the Fe cation site.

The protein belongs to the ribonucleoside diphosphate reductase small chain family. Heterodimer of a large and a small subunit. The cofactor is Fe cation.

Its subcellular location is the cytoplasm. The enzyme catalyses a 2'-deoxyribonucleoside 5'-diphosphate + [thioredoxin]-disulfide + H2O = a ribonucleoside 5'-diphosphate + [thioredoxin]-dithiol. Its function is as follows. Provides the precursors necessary for DNA synthesis. Catalyzes the biosynthesis of deoxyribonucleotides from the corresponding ribonucleotides. The polypeptide is Ribonucleoside-diphosphate reductase subunit M2 (rrm2) (Danio rerio (Zebrafish)).